The chain runs to 244 residues: L-xylulose reductase (244 aa).

The residue at position 1 (M1) is an N-acetylmethionine. 11 to 39 serves as a coordination point for NADP(+); that stretch reads LVTGAGKGIGRSTVLALKAAGAQVVAVSR. The residue at position 21 (R21) is an Omega-N-methylarginine. A substrate-binding site is contributed by S136. Residue Y149 is the Proton acceptor of the active site. Residue K153 is part of the active site.

Belongs to the short-chain dehydrogenases/reductases (SDR) family. As to quaternary structure, homotetramer. In terms of tissue distribution, highly expressed in kidney and liver. Expressed in epididymis. Expressed at intermediate level in lung. Weakly expressed in brain, heart, spleen and testis.

The protein localises to the membrane. It catalyses the reaction xylitol + NADP(+) = L-xylulose + NADPH + H(+). In terms of biological role, catalyzes the NADPH-dependent reduction of several pentoses, tetroses, trioses, alpha-dicarbonyl compounds and L-xylulose. Participates in the uronate cycle of glucose metabolism. May play a role in the water absorption and cellular osmoregulation in the proximal renal tubules by producing xylitol, an osmolyte, thereby preventing osmolytic stress from occurring in the renal tubules. The chain is L-xylulose reductase (DCXR) from Cavia porcellus (Guinea pig).